A 486-amino-acid polypeptide reads, in one-letter code: MTTFYTVVSWLVILGYWILIAGVTLRILMKRRAVPSAMAWLLIIYILPLVGIIAYLSFGELHLGKRRAERARAMWPSTAKWLNDLKACKHIFAEENSSVASSLFKLCERRQGIAGVKGNQLQLLTDSDDVMQALIRDIQLARHNIEMVFYIWQPGGMADQVAESLMAAARRGIHCRLMLDSAGSVAFFRSPWAAMMRNAGIEVVEALKVNLMRVFLRRMDLRQHRKMVMIDNYIAYTGSMNMVDPRFFKQDAGVGQWVDLMARMEGPVATAMGIVYSCDWEIETGKRILPPPPDVNIMPFEQASGHTIHTIASGPGFPEDLIHQALLTAAYSAREYLIMTTPYFVPSDDLLHAICTAAQRGVDVSIILPRKNDSMLVGWASRAFFTELLAAGVKIYQFEGGLLHTKSVLVDGELSLVGTVNLDMRSLWLNFEITLVIDDAGFGGDLAAVQDDYISRSRLLDARLWVKRPLWQRITERLFYFFSPLL.

2 consecutive transmembrane segments (helical) span residues 3–23 (TFYT…IAGV) and 38–58 (MAWL…YLSF). 2 PLD phosphodiesterase domains span residues 219 to 246 (MDLR…VDPR) and 399 to 426 (EGGL…DMRS). Active-site residues include His-224, Lys-226, Asp-231, His-404, Lys-406, and Asp-411.

This sequence belongs to the phospholipase D family. Cardiolipin synthase subfamily. ClsA sub-subfamily.

The protein localises to the cell inner membrane. The catalysed reaction is 2 a 1,2-diacyl-sn-glycero-3-phospho-(1'-sn-glycerol) = a cardiolipin + glycerol. Its function is as follows. Catalyzes the reversible phosphatidyl group transfer from one phosphatidylglycerol molecule to another to form cardiolipin (CL) (diphosphatidylglycerol) and glycerol. This Citrobacter koseri (strain ATCC BAA-895 / CDC 4225-83 / SGSC4696) protein is Cardiolipin synthase A.